Here is a 461-residue protein sequence, read N- to C-terminus: Coagulation factor IX (461 aa).

Residues 1-28 (MQRVNMIMAESPGLITICLLGYLLSAEC) form the signal peptide. Positions 29-46 (TVFLDHENANKILNRPKR) are excised as a propeptide. Ca(2+) is bound by residues tyrosine 47, asparagine 48, glutamate 53, glutamate 54, glutamate 61, glutamate 63, glutamate 66, glutamate 67, glutamate 72, glutamate 73, and glutamate 76. The region spanning 47–92 (YNSGKLEEFVQGNLERECMEEKCSFEEAREVFENTERTTEFWKQYV) is the Gla domain. A 4-carboxyglutamate mark is found at glutamate 53, glutamate 54, glutamate 61, glutamate 63, glutamate 66, glutamate 67, glutamate 72, glutamate 73, glutamate 76, glutamate 79, and glutamate 82. Glutamate 61 contributes to the Mg(2+) binding site. Cysteine 64 and cysteine 69 are joined by a disulfide. Glutamate 66 serves as a coordination point for Mg(2+). Glutamate 72 contributes to the Mg(2+) binding site. Glutamate 76 provides a ligand contact to Mg(2+). Glutamate 82 serves as a coordination point for Ca(2+). Glutamate 82 provides a ligand contact to Mg(2+). O-linked (GalNAc...) threonine glycosylation is present at threonine 85. Ca(2+)-binding residues include glutamate 86, aspartate 93, glycine 94, and glutamine 96. Position 86 is a 4-carboxyglutamate (glutamate 86). Glutamate 86 serves as a coordination point for Mg(2+). An EGF-like 1; calcium-binding domain is found at 93 to 129 (DGDQCESNPCLNGGSCKDDINSYECWCPFGFEGKNCE). Cystine bridges form between cysteine 97–cysteine 108, cysteine 102–cysteine 117, cysteine 119–cysteine 128, cysteine 134–cysteine 145, cysteine 141–cysteine 155, cysteine 157–cysteine 170, cysteine 178–cysteine 335, cysteine 252–cysteine 268, cysteine 382–cysteine 396, and cysteine 407–cysteine 435. O-linked (Glc...) serine glycosylation occurs at serine 99. Serine 107 is a glycosylation site (O-linked (Fuc...) serine). The Ca(2+) site is built by aspartate 110 and aspartate 111. A (3R)-3-hydroxyaspartate modification is found at aspartate 110. A Phosphoserine modification is found at serine 114. The region spanning 130–171 (LDVTCNIKNGRCEQFCKNSADNKVVCSCTEGYRLAENQKSCE) is the EGF-like 2 domain. Positions 192 to 226 (AETVFPDVDYVNSTEAETILDNITQSTQSFNDFTR) are cleaved as a propeptide — activation peptide. Tyrosine 201 is subject to Sulfotyrosine. N-linked (GlcNAc...) asparagine glycosylation is present at asparagine 203. Serine 204 is subject to Phosphoserine. Threonine 205 bears the Phosphothreonine; alternate mark. Threonine 205 is a glycosylation site (O-linked (GalNAc...) threonine; alternate). N-linked (GlcNAc...) asparagine glycosylation is present at asparagine 213. Threonine 215 and threonine 225 each carry an O-linked (GalNAc...) threonine glycan. Positions 227–459 (VVGGEDAKPG…YVNWIKEKTK (233 aa)) constitute a Peptidase S1 domain. The active-site Charge relay system is the histidine 267. Residues glutamate 281, asparagine 283, glutamate 286, glutamate 288, and glutamate 291 each coordinate Ca(2+). Aspartate 315 acts as the Charge relay system in catalysis. Catalysis depends on serine 411, which acts as the Charge relay system.

This sequence belongs to the peptidase S1 family. Heterodimer of a light chain and a heavy chain; disulfide-linked. Interacts (inactive and activated) with F11 (activated) in calcium-dependent manner. Interacts with SERPINC1. Interacts (activated) with iripin-8, a serine protease inhibitor from Ixodes ricinus saliva. Interacts (inactive and activated) with nitrophorin-2, an anticoagulant protein from Rhodnius prolixus. In terms of processing, activated by factor XIa, which excises the activation peptide. The propeptide can also be removed by snake venom protease. Activated by coagulation factor VIIa-tissue factor (F7-F3) complex in calcium-dependent manner. The iron and 2-oxoglutarate dependent 3-hydroxylation of aspartate and asparagine is (R) stereospecific within EGF domains. In terms of tissue distribution, detected in blood plasma (at protein level). Synthesized primarily in the liver and secreted in plasma.

The protein resides in the secreted. It carries out the reaction Selective cleavage of Arg-|-Ile bond in factor X to form factor Xa.. Functionally, factor IX is a vitamin K-dependent plasma protein that participates in the intrinsic pathway of blood coagulation by converting factor X to its active form in the presence of Ca(2+) ions, phospholipids, and factor VIIIa. The polypeptide is Coagulation factor IX (F9) (Homo sapiens (Human)).